The primary structure comprises 208 residues: FMN-dependent NADH:quinone oxidoreductase (208 aa).

FMN contacts are provided by residues serine 9 and 15 to 17 (SHS).

The protein belongs to the azoreductase type 1 family. In terms of assembly, homodimer. The cofactor is FMN.

It catalyses the reaction 2 a quinone + NADH + H(+) = 2 a 1,4-benzosemiquinone + NAD(+). It carries out the reaction N,N-dimethyl-1,4-phenylenediamine + anthranilate + 2 NAD(+) = 2-(4-dimethylaminophenyl)diazenylbenzoate + 2 NADH + 2 H(+). Quinone reductase that provides resistance to thiol-specific stress caused by electrophilic quinones. Its function is as follows. Also exhibits azoreductase activity. Catalyzes the reductive cleavage of the azo bond in aromatic azo compounds to the corresponding amines. The chain is FMN-dependent NADH:quinone oxidoreductase from Bordetella petrii (strain ATCC BAA-461 / DSM 12804 / CCUG 43448).